The chain runs to 892 residues: Iodate reductase subunit IdrA (892 aa).

Residues Cys27, Cys30, and Cys34 each coordinate [3Fe-4S] cluster. Residues Arg431 to Ala442 show a composition bias toward gly residues. The segment at Arg431 to Glu452 is disordered.

It belongs to the prokaryotic molybdopterin-containing oxidoreductase family. As to quaternary structure, the iodate reductase (Idr) complex is composed of a molybdopterin-dependent iodate reductase (IdrA and IdrB subunits) and two associated peroxidases (IdrP1 and IdrP2). It depends on [3Fe-4S] cluster as a cofactor. Mo-bis(molybdopterin guanine dinucleotide) is required as a cofactor.

The protein resides in the periplasm. In terms of biological role, involved in iodate respiration. Probably catalyzes the reduction of iodate (IO(3)(-)) to hypoiodous acid (HIO) and H(2)O(2), using a reduced cytochrome c as the electron donor. This Pseudomonas sp. (strain SCT) protein is Iodate reductase subunit IdrA.